The sequence spans 867 residues: Leucine--tRNA ligase (867 aa).

The short motif at Pro40–His51 is the 'HIGH' region element. Positions Lys638–Ser642 match the 'KMSKS' region motif. Residue Lys641 participates in ATP binding.

This sequence belongs to the class-I aminoacyl-tRNA synthetase family.

It localises to the cytoplasm. It catalyses the reaction tRNA(Leu) + L-leucine + ATP = L-leucyl-tRNA(Leu) + AMP + diphosphate. This is Leucine--tRNA ligase from Leptospira biflexa serovar Patoc (strain Patoc 1 / Ames).